The following is a 259-amino-acid chain: 5'-nucleotidase SurE (259 aa).

A divalent metal cation-binding residues include Asp10, Asp11, Ser41, and Asn96.

It belongs to the SurE nucleotidase family. A divalent metal cation serves as cofactor.

The protein localises to the cytoplasm. It catalyses the reaction a ribonucleoside 5'-phosphate + H2O = a ribonucleoside + phosphate. Its function is as follows. Nucleotidase that shows phosphatase activity on nucleoside 5'-monophosphates. The chain is 5'-nucleotidase SurE from Wolinella succinogenes (strain ATCC 29543 / DSM 1740 / CCUG 13145 / JCM 31913 / LMG 7466 / NCTC 11488 / FDC 602W) (Vibrio succinogenes).